We begin with the raw amino-acid sequence, 1237 residues long: Zinc finger protein ZFAT (1237 aa).

Residues Phe12 to His35 form a C2H2-type 1 zinc finger. The disordered stretch occupies residues Arg50–Arg110. Residues Met70–Thr81 are compositionally biased toward basic residues. The segment at Leu116–Asn141 adopts a C2H2-type 2; degenerate zinc-finger fold. Residues Gly147 to Glu188 are disordered. Residues Asp156 to Gly186 are compositionally biased toward basic and acidic residues. C2H2-type zinc fingers lie at residues Phe271–His293, Tyr299–His321, Phe326–His349, Gln354–His377, Tyr404–His426, Phe432–His454, and Tyr458–His481. Zn(2+)-binding residues include Cys273, Cys276, His289, His293, Cys301, Cys304, His317, His321, Cys328, Cys331, His344, His349, Cys356, Cys359, His372, His377, Cys406, Cys409, His422, and His426. The Zn(2+) site is built by Cys460, Cys463, His476, and His481. 2 disordered regions span residues Val551–Cys576 and Ser601–Ala671. Over residues Thr565 to Ser574 the composition is skewed to polar residues. A compositionally biased stretch (low complexity) spans Ser601–Asp617. 4 consecutive C2H2-type zinc fingers follow at residues Leu737–His759, Tyr765–His788, Leu793–His817, and Tyr825–His848. 24 residues coordinate Zn(2+): Cys767, Cys770, His783, His788, Cys795, Cys800, His813, His817, Cys827, Cys830, His843, His848, Cys877, Cys880, His894, His898, Cys906, Cys909, His922, His926, Cys934, Cys937, His950, and Leu953. A C2H2-type 14; degenerate zinc finger spans residues Met875–His898. 5 C2H2-type zinc fingers span residues Phe904–His926, His932–His954, Phe961–His983, Phe989–His1012, and Leu1036–His1059.

Detected in spleen and thymus but not in liver, muscle, heart, kidney, brain, bone marrow or pancreas. Expressed in CD19+, CD4+ and CD8+ lymphocytes but not in CD11b+ lymphocytes or peritoneal macrophages (at protein level).

It localises to the nucleus. It is found in the cytoplasm. The protein resides in the cytosol. Its function is as follows. May be involved in transcriptional regulation. Overexpression causes down-regulation of a number of genes involved in the immune response. Some genes are also up-regulated. This Mus musculus (Mouse) protein is Zinc finger protein ZFAT (Zfat).